The chain runs to 204 residues: MKIVLATNNKDKVKEIKAFYDGYEIYALNEICEPFEIDETGSSFKENALIKATAVYAKLCALKLENEFIALSDDSGISVEALGFAPGIYSARYSGKDATDASNRKKLTCELHKLRLKKSGAFYTACIAVASKFGNFSTHGFMYGTVIDEERGDNGFGYDFMFMPDGFDGTIGQLDVKTKLAISHRSKGLELAKYILNSLEKYYK.

7–12 (TNNKDK) contributes to the substrate binding site. Mg(2+) contacts are provided by Asp-38 and Asp-74. Catalysis depends on Asp-74, which acts as the Proton acceptor. Residues Ser-75, 156 to 159 (FGYD), Lys-179, and 184 to 185 (HR) each bind substrate.

Belongs to the HAM1 NTPase family. In terms of assembly, homodimer. It depends on Mg(2+) as a cofactor.

It carries out the reaction XTP + H2O = XMP + diphosphate + H(+). The enzyme catalyses dITP + H2O = dIMP + diphosphate + H(+). The catalysed reaction is ITP + H2O = IMP + diphosphate + H(+). Pyrophosphatase that catalyzes the hydrolysis of nucleoside triphosphates to their monophosphate derivatives, with a high preference for the non-canonical purine nucleotides XTP (xanthosine triphosphate), dITP (deoxyinosine triphosphate) and ITP. Seems to function as a house-cleaning enzyme that removes non-canonical purine nucleotides from the nucleotide pool, thus preventing their incorporation into DNA/RNA and avoiding chromosomal lesions. The sequence is that of dITP/XTP pyrophosphatase from Campylobacter fetus subsp. fetus (strain 82-40).